The following is a 275-amino-acid chain: Putative replication protein (275 aa).

A BRCT domain is found at 98–198; it reads SKAICFTPYD…RILKISEDYF (101 aa).

The chain is Putative replication protein from Wigglesworthia glossinidia brevipalpis.